A 382-amino-acid chain; its full sequence is S-adenosylmethionine synthase (382 aa).

Residue histidine 15 participates in ATP binding. Aspartate 17 provides a ligand contact to Mg(2+). A K(+)-binding site is contributed by glutamate 43. L-methionine is bound by residues glutamate 56 and glutamine 99. The segment at 99–109 is flexible loop; the sequence is QSPDINQGVDR. Residues 164–166, 230–231, aspartate 239, 245–246, alanine 262, and lysine 266 contribute to the ATP site; these read DAK, RF, and RK. Aspartate 239 contacts L-methionine. Lysine 270 serves as a coordination point for L-methionine.

The protein belongs to the AdoMet synthase family. As to quaternary structure, homotetramer; dimer of dimers. The cofactor is Mg(2+). K(+) is required as a cofactor.

Its subcellular location is the cytoplasm. It catalyses the reaction L-methionine + ATP + H2O = S-adenosyl-L-methionine + phosphate + diphosphate. The protein operates within amino-acid biosynthesis; S-adenosyl-L-methionine biosynthesis; S-adenosyl-L-methionine from L-methionine: step 1/1. Its function is as follows. Catalyzes the formation of S-adenosylmethionine (AdoMet) from methionine and ATP. The overall synthetic reaction is composed of two sequential steps, AdoMet formation and the subsequent tripolyphosphate hydrolysis which occurs prior to release of AdoMet from the enzyme. The protein is S-adenosylmethionine synthase of Psychromonas ingrahamii (strain DSM 17664 / CCUG 51855 / 37).